The primary structure comprises 318 residues: Bis(5'-nucleosyl)-tetraphosphatase, symmetrical (318 aa).

Residues 269–318 (PGREVTGPAPVARAPRRPRERLGRQRSRGNRGNAGNTAVPAKPPVDTPQD) are disordered. The segment covering 282 to 297 (APRRPRERLGRQRSRG) has biased composition (basic residues). The segment covering 309 to 318 (AKPPVDTPQD) has biased composition (pro residues).

This sequence belongs to the Ap4A hydrolase family.

The catalysed reaction is P(1),P(4)-bis(5'-adenosyl) tetraphosphate + H2O = 2 ADP + 2 H(+). Functionally, hydrolyzes diadenosine 5',5'''-P1,P4-tetraphosphate to yield ADP. This Xanthomonas oryzae pv. oryzae (strain MAFF 311018) protein is Bis(5'-nucleosyl)-tetraphosphatase, symmetrical.